We begin with the raw amino-acid sequence, 1384 residues long: DNA-directed RNA polymerase subunit beta'' (1384 aa).

Residues Cys224, Cys297, Cys304, and Cys307 each coordinate Zn(2+).

It belongs to the RNA polymerase beta' chain family. RpoC2 subfamily. In plastids the minimal PEP RNA polymerase catalytic core is composed of four subunits: alpha, beta, beta', and beta''. When a (nuclear-encoded) sigma factor is associated with the core the holoenzyme is formed, which can initiate transcription. Zn(2+) serves as cofactor.

Its subcellular location is the plastid. It localises to the chloroplast. It carries out the reaction RNA(n) + a ribonucleoside 5'-triphosphate = RNA(n+1) + diphosphate. Functionally, DNA-dependent RNA polymerase catalyzes the transcription of DNA into RNA using the four ribonucleoside triphosphates as substrates. The sequence is that of DNA-directed RNA polymerase subunit beta'' from Sinapis alba (White mustard).